The sequence spans 248 residues: MRQVIIAGNWKMNASKEATNILVMDILSGMVDVKSKVIICVPFPYMAQVEALVGCSQLNLGAQDLNINKSGAFTGEVSVDMIKDFGARYVIVGHSERRSLYFENNEIVAQKVQVALNNNLTPLLCIGELLEDRDSGKTQEVVSEQIQAVIDLVGIDAFKDIIVAYEPVWAIGTGITATPQQAQDTHAFIRSMLAKYDDNVSQITSILYGGSMNPRNAAELMNCKDIDGGLIGGASLKAQDFLQICKAS.

Position 9 to 11 (9 to 11 (NWK)) interacts with substrate. The active-site Electrophile is the H94. E166 serves as the catalytic Proton acceptor. Residues G172, S211, and 232-233 (GG) each bind substrate.

It belongs to the triosephosphate isomerase family. As to quaternary structure, homodimer.

It is found in the cytoplasm. It carries out the reaction D-glyceraldehyde 3-phosphate = dihydroxyacetone phosphate. Its pathway is carbohydrate biosynthesis; gluconeogenesis. The protein operates within carbohydrate degradation; glycolysis; D-glyceraldehyde 3-phosphate from glycerone phosphate: step 1/1. In terms of biological role, involved in the gluconeogenesis. Catalyzes stereospecifically the conversion of dihydroxyacetone phosphate (DHAP) to D-glyceraldehyde-3-phosphate (G3P). The chain is Triosephosphate isomerase from Vesicomyosocius okutanii subsp. Calyptogena okutanii (strain HA).